We begin with the raw amino-acid sequence, 839 residues long: MGELFRSEEMTLAQLFLQSEAAYCCVSELGELGKVQFRDLNPDVNVFQRKFVNEVRRCEEMDRKLRFVEKEIRKANIPIMDTGENPEVPFPRDMIDLEANFEKIENELKEINTNQEALKRNFLELTELKFILRKTQQFFDEAELHHQQMADPDLLEESSSLLEPNEMGRGAPLRLGFVAGVINRERIPTFERMLWRVCRGNVFLRQAEIENPLEDPVTGDYVHKSVFIIFFQGDQLKNRVKKICEGFRASLYPCPETPQERKEMASGVNTRIDDLQMVLNQTEDHRQRVLQAAAKNIRVWFIKVRKMKAIYHTLNLCNIDVTQKCLIAEVWCPVTDLDSIQFALRRGTEHSGSTVPSILNRMQTNQTPPTYNKTNKFTHGFQNIVDAYGIGTYREINPAPYTVITFPFLFAVMFGDFGHGILMTLFAVWMVLRESRILSQKHENEMFSMVFSGRYIILLMGLFSIYTGLIYNDCFSKSLNIFGSSWSVRPMFTQGNWTEETLLGSSVLQLNPAIPGVFGGPYPFGIDPIWNIATNKLTFLNSFKMKMSVILGIIHMLFGVSLSLFNHIYFKKPLNIYFGFIPEIIFMSSLFGYLVILIFYKWTAYDAHSSRNAPSLLIHFINMFLFSYPESGNAMLYSGQKGIQCFLIVVAMLCVPWMLLFKPLILRHQYLRKKHLGTLNFGGIRVGNGPTEEDAEIIQHDQLSTHSEDAEEFDFGDTMVHQAIHTIEYCLGCISNTASYLRLWALSLAHAQLSEVLWTMVIHIGLHVRSLAGGLGLFFIFAAFATLTVAILLIMEGLSAFLHALRLHWVEFQNKFYTGTGFKFLPFSFEHIREGKFDE.

Residues 1–395 (MGELFRSEEM…DAYGIGTYRE (395 aa)) are Cytoplasmic-facing. Phosphothreonine occurs at positions 257 and 367. Phosphotyrosine is present on Tyr-371. Residues 396–414 (INPAPYTVITFPFLFAVMF) traverse the membrane as a helical segment. The Vacuolar segment spans residues 415-416 (GD). A helical membrane pass occupies residues 417–433 (FGHGILMTLFAVWMVLR). The Cytoplasmic portion of the chain corresponds to 434–448 (ESRILSQKHENEMFS). A helical membrane pass occupies residues 449–478 (MVFSGRYIILLMGLFSIYTGLIYNDCFSKS). Over 479–542 (LNIFGSSWSV…ATNKLTFLNS (64 aa)) the chain is Vacuolar. The helical transmembrane segment at 543-562 (FKMKMSVILGIIHMLFGVSL) threads the bilayer. Residues 563–580 (SLFNHIYFKKPLNIYFGF) lie on the Cytoplasmic side of the membrane. The helical transmembrane segment at 581 to 601 (IPEIIFMSSLFGYLVILIFYK) threads the bilayer. The Vacuolar portion of the chain corresponds to 602–646 (WTAYDAHSSRNAPSLLIHFINMFLFSYPESGNAMLYSGQKGIQCF). A helical membrane pass occupies residues 647–666 (LIVVAMLCVPWMLLFKPLIL). Residues 667–726 (RHQYLRKKHLGTLNFGGIRVGNGPTEEDAEIIQHDQLSTHSEDAEEFDFGDTMVHQAIHT) are Cytoplasmic-facing. Residues 727–751 (IEYCLGCISNTASYLRLWALSLAHA) traverse the membrane as a helical segment. The Vacuolar segment spans residues 752–772 (QLSEVLWTMVIHIGLHVRSLA). Residues 773–811 (GGLGLFFIFAAFATLTVAILLIMEGLSAFLHALRLHWVE) form a helical membrane-spanning segment. Residues 812–839 (FQNKFYTGTGFKFLPFSFEHIREGKFDE) lie on the Cytoplasmic side of the membrane.

This sequence belongs to the V-ATPase 116 kDa subunit family. As to quaternary structure, V-ATPase is a heteromultimeric enzyme made up of two complexes: the ATP-hydrolytic V1 complex and the proton translocation V0 complex. The V1 complex consists of three catalytic AB heterodimers that form a heterohexamer, three peripheral stalks each consisting of EG heterodimers, one central rotor including subunits D and F, and the regulatory subunits C and H. The proton translocation complex V0 consists of the proton transport subunit a, a ring of proteolipid subunits c9c'', rotary subunit d, subunits e and f, and the accessory subunits ATP6AP1/Ac45 and ATP6AP2/PRR. Interacts with SPAAR. In terms of tissue distribution, predominantly expressed in neurons in the cortex and in the dentate gyrus, CA1 and CA3 regions of the hippocampus (at protein level). Expressed at lower levels in astrocytes, oligodendrocytes and microglia (at protein level). In the cerebellum, present in Purkinje and granule cells (at protein level).

Its subcellular location is the cytoplasmic vesicle. The protein localises to the clathrin-coated vesicle membrane. It is found in the secretory vesicle. It localises to the synaptic vesicle membrane. The protein resides in the melanosome. Subunit of the V0 complex of vacuolar(H+)-ATPase (V-ATPase), a multisubunit enzyme composed of a peripheral complex (V1) that hydrolyzes ATP and a membrane integral complex (V0) that translocates protons. V-ATPase is responsible for the acidification of various organelles, such as lysosomes, endosomes, the trans-Golgi network, and secretory granules, including synaptic vesicles. In certain cell types, can be exported to the plasma membrane, where it is involved in the acidification of the extracellular environment. Required for assembly and activity of the vacuolar ATPase. Through its action on compartment acidification, plays an essential role in neuronal development in terms of integrity and connectivity of neurons. This chain is V-type proton ATPase 116 kDa subunit a 1 (Atp6v0a1), found in Mus musculus (Mouse).